Consider the following 343-residue polypeptide: Anthranilate phosphoribosyltransferase (343 aa).

5-phospho-alpha-D-ribose 1-diphosphate is bound by residues Gly84, 87–88 (GD), Thr92, 94–97 (NIST), 112–120 (KHGNRGVSS), and Ser124. Gly84 contacts anthranilate. Position 96 (Ser96) interacts with Mg(2+). Asn115 contacts anthranilate. Position 170 (Arg170) interacts with anthranilate. Residues Asp229 and Glu230 each coordinate Mg(2+).

This sequence belongs to the anthranilate phosphoribosyltransferase family. In terms of assembly, homodimer. Mg(2+) is required as a cofactor.

It catalyses the reaction N-(5-phospho-beta-D-ribosyl)anthranilate + diphosphate = 5-phospho-alpha-D-ribose 1-diphosphate + anthranilate. The protein operates within amino-acid biosynthesis; L-tryptophan biosynthesis; L-tryptophan from chorismate: step 2/5. Catalyzes the transfer of the phosphoribosyl group of 5-phosphorylribose-1-pyrophosphate (PRPP) to anthranilate to yield N-(5'-phosphoribosyl)-anthranilate (PRA). The chain is Anthranilate phosphoribosyltransferase from Burkholderia vietnamiensis (strain G4 / LMG 22486) (Burkholderia cepacia (strain R1808)).